Here is a 178-residue protein sequence, read N- to C-terminus: Hypoxanthine-guanine phosphoribosyltransferase (178 aa).

Diphosphate is bound by residues Lys46 and Gly47. Asp103 contacts Mg(2+). Residue Asp106 is the Proton acceptor of the active site. Residues Lys134, 155–156 (FL), and Asp162 each bind GMP. Position 168 (Arg168) interacts with diphosphate.

Belongs to the purine/pyrimidine phosphoribosyltransferase family. Requires Mg(2+) as cofactor.

It localises to the cytoplasm. The enzyme catalyses IMP + diphosphate = hypoxanthine + 5-phospho-alpha-D-ribose 1-diphosphate. It catalyses the reaction GMP + diphosphate = guanine + 5-phospho-alpha-D-ribose 1-diphosphate. Its pathway is purine metabolism; IMP biosynthesis via salvage pathway; IMP from hypoxanthine: step 1/1. It functions in the pathway purine metabolism; GMP biosynthesis via salvage pathway; GMP from guanine: step 1/1. Its function is as follows. Purine salvage pathway enzyme that catalyzes the transfer of the ribosyl-5-phosphate group from 5-phospho-alpha-D-ribose 1-diphosphate (PRPP) to the N9 position of the 6-oxopurines hypoxanthine and guanine to form the corresponding ribonucleotides IMP (inosine 5'-monophosphate) and GMP (guanosine 5'-monophosphate), with the release of PPi. In Aquifex aeolicus (strain VF5), this protein is Hypoxanthine-guanine phosphoribosyltransferase (hpt).